A 155-amino-acid polypeptide reads, in one-letter code: MHHFSNIKDVVAIDFIKAYAEHLKKSGKLEIPEWVDTVKTGMCKELAPLNPDWIYIRAAAIARKVYLNNGIGVMALRRAYGDQYNKHYNPSHRTLGSGKVNRYILQQLEKMGIVAKIQSGRSLTKEGRKDMDKIAFQVYKEHEAKVTPMILMPMN.

Belongs to the eukaryotic ribosomal protein eS19 family. Component of the small ribosomal subunit.

The protein resides in the cytoplasm. In terms of biological role, component of the small ribosomal subunit. The ribosome is a large ribonucleoprotein complex responsible for the synthesis of proteins in the cell. Required for proper maturation of the small (40S) ribosomal subunit. This Entamoeba histolytica (strain ATCC 30459 / HM-1:IMSS / ABRM) protein is Small ribosomal subunit protein eS19 (RPS19).